The following is a 476-amino-acid chain: S-adenosylmethionine-dependent nucleotide dehydratase (476 aa).

Positions 1-168 (MKTKITLSGF…LTANEVADLI (168 aa)) are cytidylate kinase-like domain. 9 to 17 (GFAGTGKST) contacts ATP. A Radical SAM core domain is found at 176 to 400 (NAVSKIPSVN…HKDVETIVPE (225 aa)). The interval 183 to 476 (SVNFHLWQPC…DLRKEEVSYE (294 aa)) is prokaryotic viperin domain. Positions 192, 196, and 199 each coordinate [4Fe-4S] cluster.

The protein in the N-terminal section; belongs to the cytidylate kinase-like family. It in the C-terminal section; belongs to the radical SAM superfamily. Viperin family. [4Fe-4S] cluster is required as a cofactor.

The catalysed reaction is GTP + AH2 + S-adenosyl-L-methionine = 3'-deoxy-3',4'-didehydro-GTP + 5'-deoxyadenosine + L-methionine + A + H2O + H(+). In terms of biological role, expression of pVip60 in E.coli (strain MG1655) confers resistance to phage T7; prevents culture collapse upon infection. Catalyzes the conversion of guanosine triphosphate (GTP) to 3'-deoxy-3',4'-didehydro-GTP (ddhGTP), probably via a SAM-dependent radical mechanism. The modified nucleotide represses transcription from T7 RNA polymerase-directed genes (possibly by acting as chain terminators), strongly suggesting these nucleotides block viral polymerase transcription. The N-terminus of the protein may generate NTP for use by the viperin domain. In Lacinutrix mariniflava (strain JCM 13824 / KCCM 42306 / AKS432), this protein is S-adenosylmethionine-dependent nucleotide dehydratase.